Here is a 542-residue protein sequence, read N- to C-terminus: CTP synthase (542 aa).

Positions 1 to 265 (MARYIFITGG…DDEVLAAFGL (265 aa)) are amidoligase domain. S13 contributes to the CTP binding site. Residue S13 participates in UTP binding. Residue 14-19 (SLGKGL) participates in ATP binding. Y54 contributes to the L-glutamine binding site. D71 serves as a coordination point for ATP. 2 residues coordinate Mg(2+): D71 and E139. CTP-binding positions include 146 to 148 (DIE), 186 to 191 (KTKPTQ), and K222. Residues 186–191 (KTKPTQ) and K222 each bind UTP. 238–240 (RDA) contacts ATP. The Glutamine amidotransferase type-1 domain maps to 290–541 (TIAIVGKYTG…IQAAVVQSRL (252 aa)). Residue G352 coordinates L-glutamine. Catalysis depends on C379, which acts as the Nucleophile; for glutamine hydrolysis. L-glutamine-binding positions include 380-383 (FGMQ), E403, and R469. Residues H514 and E516 contribute to the active site.

The protein belongs to the CTP synthase family. As to quaternary structure, homotetramer.

The catalysed reaction is UTP + L-glutamine + ATP + H2O = CTP + L-glutamate + ADP + phosphate + 2 H(+). It carries out the reaction L-glutamine + H2O = L-glutamate + NH4(+). The enzyme catalyses UTP + NH4(+) + ATP = CTP + ADP + phosphate + 2 H(+). It functions in the pathway pyrimidine metabolism; CTP biosynthesis via de novo pathway; CTP from UDP: step 2/2. Its activity is regulated as follows. Allosterically activated by GTP, when glutamine is the substrate; GTP has no effect on the reaction when ammonia is the substrate. The allosteric effector GTP functions by stabilizing the protein conformation that binds the tetrahedral intermediate(s) formed during glutamine hydrolysis. Inhibited by the product CTP, via allosteric rather than competitive inhibition. In terms of biological role, catalyzes the ATP-dependent amination of UTP to CTP with either L-glutamine or ammonia as the source of nitrogen. Regulates intracellular CTP levels through interactions with the four ribonucleotide triphosphates. This Nitrobacter hamburgensis (strain DSM 10229 / NCIMB 13809 / X14) protein is CTP synthase.